The primary structure comprises 147 residues: Bis(5'-adenosyl)-triphosphatase (147 aa).

Residues 2 to 109 form the HIT domain; sequence SFRFGQHLIK…LPRKAGDFHR (108 aa). Substrate contacts are provided by residues histidine 8, asparagine 27, glutamine 83, and 89-92; that span reads GQTV. Residues 94–98 carry the Histidine triad motif motif; sequence HVHVH. Histidine 96 acts as the Tele-AMP-histidine intermediate in catalysis. Histidine 98 contributes to the substrate binding site. Residue tyrosine 114 is modified to Phosphotyrosine; by SRC. Tyrosine 145 bears the Phosphotyrosine mark.

In terms of assembly, homodimer. Interacts with UBE2I. Interacts with MDM2. Interacts with CTNNB1. Identified in a complex with CTNNB1 and LEF1. Phosphorylation at Tyr-114 by SRC is required for induction of apoptosis. Low levels expressed in all tissues tested. Phospho-FHIT observed in liver and kidney, but not in brain and lung. Phospho-FHIT undetected in all tested human tumor cell lines.

The protein resides in the cytoplasm. It localises to the mitochondrion. Its subcellular location is the nucleus. It carries out the reaction P(1),P(3)-bis(5'-adenosyl) triphosphate + H2O = AMP + ADP + 2 H(+). The catalysed reaction is adenosine 5'-phosphosulfate + H2O = sulfate + AMP + 2 H(+). It catalyses the reaction adenosine 5'-phosphosulfate + NH4(+) = adenosine 5'-phosphoramidate + sulfate + 2 H(+). The enzyme catalyses adenosine 5'-phosphoramidate + H2O = AMP + NH4(+). Possesses dinucleoside triphosphate hydrolase activity. Cleaves P(1)-P(3)-bis(5'-adenosyl) triphosphate (Ap3A) to yield AMP and ADP. Can also hydrolyze P(1)-P(4)-bis(5'-adenosyl) tetraphosphate (Ap4A), but has extremely low activity with ATP. Exhibits adenylylsulfatase activity, hydrolyzing adenosine 5'-phosphosulfate to yield AMP and sulfate. Exhibits adenosine 5'-monophosphoramidase activity, hydrolyzing purine nucleotide phosphoramidates with a single phosphate group such as adenosine 5'monophosphoramidate (AMP-NH2) to yield AMP and NH2. Exhibits adenylylsulfate-ammonia adenylyltransferase, catalyzing the ammonolysis of adenosine 5'-phosphosulfate resulting in the formation of adenosine 5'-phosphoramidate. Also catalyzes the ammonolysis of adenosine 5-phosphorofluoridate and diadenosine triphosphate. Modulates transcriptional activation by CTNNB1 and thereby contributes to regulate the expression of genes essential for cell proliferation and survival, such as CCND1 and BIRC5. Plays a role in the induction of apoptosis via SRC and AKT1 signaling pathways. Inhibits MDM2-mediated proteasomal degradation of p53/TP53 and thereby plays a role in p53/TP53-mediated apoptosis. Induction of apoptosis depends on the ability of FHIT to bind P(1)-P(3)-bis(5'-adenosyl) triphosphate or related compounds, but does not require its catalytic activity, it may in part come from the mitochondrial form, which sensitizes the low-affinity Ca(2+) transporters, enhancing mitochondrial calcium uptake. Functions as a tumor suppressor. The chain is Bis(5'-adenosyl)-triphosphatase (FHIT) from Homo sapiens (Human).